The sequence spans 141 residues: Hemoglobin subunit alpha-A/A' (141 aa).

The 141-residue stretch at 1 to 141 (VLSANDKTNV…VGNVLTAKYR (141 aa)) folds into the Globin domain. O2 is bound at residue histidine 58. Histidine 87 is a binding site for heme b.

Belongs to the globin family. In terms of assembly, heterotetramer of two alpha chains and two beta chains. Red blood cells.

Involved in oxygen transport from the lung to the various peripheral tissues. In Gyps rueppelli (Rueppell's griffon), this protein is Hemoglobin subunit alpha-A/A' (HBAA).